The sequence spans 571 residues: Proline--tRNA ligase (571 aa).

It belongs to the class-II aminoacyl-tRNA synthetase family. ProS type 1 subfamily. Homodimer.

The protein localises to the cytoplasm. The enzyme catalyses tRNA(Pro) + L-proline + ATP = L-prolyl-tRNA(Pro) + AMP + diphosphate. In terms of biological role, catalyzes the attachment of proline to tRNA(Pro) in a two-step reaction: proline is first activated by ATP to form Pro-AMP and then transferred to the acceptor end of tRNA(Pro). As ProRS can inadvertently accommodate and process non-cognate amino acids such as alanine and cysteine, to avoid such errors it has two additional distinct editing activities against alanine. One activity is designated as 'pretransfer' editing and involves the tRNA(Pro)-independent hydrolysis of activated Ala-AMP. The other activity is designated 'posttransfer' editing and involves deacylation of mischarged Ala-tRNA(Pro). The misacylated Cys-tRNA(Pro) is not edited by ProRS. The sequence is that of Proline--tRNA ligase from Ectopseudomonas mendocina (strain ymp) (Pseudomonas mendocina).